Consider the following 247-residue polypeptide: Flagellar brake protein YcgR 2 (247 aa).

A PilZ domain is found at 124-237 (QRREYFRVET…DETRIQRYIA (114 aa)).

Belongs to the YcgR family. Monomer. Interacts with the flagellar basal bodies.

It localises to the bacterial flagellum basal body. Its function is as follows. Acts as a flagellar brake, regulating swimming and swarming in a bis-(3'-5') cyclic diguanylic acid (c-di-GMP)-dependent manner. Binds 1 c-di-GMP dimer per subunit. Increasing levels of c-di-GMP lead to decreased motility. In Dechloromonas aromatica (strain RCB), this protein is Flagellar brake protein YcgR 2.